Here is a 278-residue protein sequence, read N- to C-terminus: ATP synthase subunit delta (278 aa).

Belongs to the ATPase delta chain family. In terms of assembly, F-type ATPases have 2 components, F(1) - the catalytic core - and F(0) - the membrane proton channel. F(1) has five subunits: alpha(3), beta(3), gamma(1), delta(1), epsilon(1). F(0) has three main subunits: a(1), b(2) and c(10-14). The alpha and beta chains form an alternating ring which encloses part of the gamma chain. F(1) is attached to F(0) by a central stalk formed by the gamma and epsilon chains, while a peripheral stalk is formed by the delta and b chains.

The protein resides in the cell membrane. Its function is as follows. F(1)F(0) ATP synthase produces ATP from ADP in the presence of a proton or sodium gradient. F-type ATPases consist of two structural domains, F(1) containing the extramembraneous catalytic core and F(0) containing the membrane proton channel, linked together by a central stalk and a peripheral stalk. During catalysis, ATP synthesis in the catalytic domain of F(1) is coupled via a rotary mechanism of the central stalk subunits to proton translocation. Functionally, this protein is part of the stalk that links CF(0) to CF(1). It either transmits conformational changes from CF(0) to CF(1) or is implicated in proton conduction. The polypeptide is ATP synthase subunit delta (Bifidobacterium longum (strain DJO10A)).